The chain runs to 499 residues: Probable 2-isopropylmalate synthase (499 aa).

The Pyruvate carboxyltransferase domain occupies 5-256 (VRIFDTTLRD…ELDVRTEMLV (252 aa)). The a divalent metal cation site is built by D14, H194, H196, and N230.

This sequence belongs to the alpha-IPM synthase/homocitrate synthase family. In terms of assembly, homodimer. A divalent metal cation serves as cofactor.

It carries out the reaction 3-methyl-2-oxobutanoate + acetyl-CoA + H2O = (2S)-2-isopropylmalate + CoA + H(+). Its pathway is amino-acid biosynthesis; L-leucine biosynthesis; L-leucine from 3-methyl-2-oxobutanoate: step 1/4. In terms of biological role, catalyzes the condensation of the acetyl group of acetyl-CoA with 3-methyl-2-oxobutanoate (2-oxoisovalerate) to form 3-carboxy-3-hydroxy-4-methylpentanoate (2-isopropylmalate). The polypeptide is Probable 2-isopropylmalate synthase (leuA) (Methanopyrus kandleri (strain AV19 / DSM 6324 / JCM 9639 / NBRC 100938)).